A 340-amino-acid chain; its full sequence is Cytochrome P450 monooxygenase cheG (340 aa).

Residue asparagine 25 is glycosylated (N-linked (GlcNAc...) asparagine). Residues 37-57 form a helical membrane-spanning segment; it reads MLLGIPTVILSLTPAVLRLLI. Position 283 (cysteine 283) interacts with heme. Residues 308-340 are disordered; it reads LPPGQGKPEKGSMPNGSMSPDTKAKVLFRSRKL. Residue asparagine 322 is glycosylated (N-linked (GlcNAc...) asparagine).

The protein belongs to the cytochrome P450 family. Heme is required as a cofactor.

The protein localises to the membrane. It participates in secondary metabolite biosynthesis. Functionally, cytochrome P450 monooxygenase; part of the gene cluster that mediates the biosynthesis of chaetoglobosin A which has a unique inhibitory activity against actin polymerization in mammalian cells. Chaetoglobosin A and its intermediates are involved in the morphological differentiation of C.globosum. The first step of the pathway is the synthesis of prochaetoglobosin I via condensation of one acetyl-CoA, 8 malonyl-CoA, and a L-tryptophan molecule by the PKS-NRPS hybrid synthetase cheA, followed by reduction of backbone double bond to install desired geometry by the enoyl reductase cheB. Further multiple oxidation steps performed by the cytochrome P450 monooxygenases cheE and cheG, as well as by the FAD-linked oxidoreductase cheF, lead to the formation of chaetoglobosin A. Depending on the order of action of these reductases, distinct intermediates can be identified. Within the pathway, the cytochrome P450 monooxygenase cheE catalyzes a stereospecific epoxidation on prochaetoglobosin I, cytoglobosin D, and chaetoglobosin J intermediates. The FAD-linked oxidoreductase cheF performs dehydrogenation of the C-20 hydroxyl groups in the 20-dihyrochaetoglobosin A and cytoglobosin D intermediates. Finally, the cytochrome P450 monooxygenase cheG can catalyze the stereospecific dihydroxylation of prochaetoglobosin I and prochaetoglobosin IV at C-19 and C-20, respectively. The Diels-Alderase cheD may play a role in the post-PKS-NRPS biosynthetic steps catalyzing Diels-Alder cyclization. In Chaetomium globosum (strain ATCC 6205 / CBS 148.51 / DSM 1962 / NBRC 6347 / NRRL 1970) (Soil fungus), this protein is Cytochrome P450 monooxygenase cheG.